The primary structure comprises 58 residues: Large ribosomal subunit protein bL32 (58 aa).

It belongs to the bacterial ribosomal protein bL32 family.

The chain is Large ribosomal subunit protein bL32 from Caldicellulosiruptor saccharolyticus (strain ATCC 43494 / DSM 8903 / Tp8T 6331).